We begin with the raw amino-acid sequence, 322 residues long: ATP-dependent 6-phosphofructokinase (322 aa).

Residue Gly-11 participates in ATP binding. An ADP-binding site is contributed by 21–25 (RAVTR). ATP-binding positions include 72-73 (RC) and 102-105 (GDGS). Residue Asp-103 coordinates Mg(2+). Residue 127 to 129 (TID) coordinates substrate. Asp-129 functions as the Proton acceptor in the catalytic mechanism. Arg-156 is a binding site for ADP. Substrate is bound by residues Arg-164 and 171 to 173 (MGR). ADP-binding positions include 187 to 189 (GAE), Arg-213, and 215 to 217 (KKH). Residues Glu-224, Arg-245, and 251 to 254 (HIQR) each bind substrate.

The protein belongs to the phosphofructokinase type A (PFKA) family. ATP-dependent PFK group I subfamily. Prokaryotic clade 'B1' sub-subfamily. In terms of assembly, homotetramer. It depends on Mg(2+) as a cofactor.

The protein resides in the cytoplasm. The enzyme catalyses beta-D-fructose 6-phosphate + ATP = beta-D-fructose 1,6-bisphosphate + ADP + H(+). It participates in carbohydrate degradation; glycolysis; D-glyceraldehyde 3-phosphate and glycerone phosphate from D-glucose: step 3/4. With respect to regulation, allosterically activated by ADP and other diphosphonucleosides, and allosterically inhibited by phosphoenolpyruvate. Catalyzes the phosphorylation of D-fructose 6-phosphate to fructose 1,6-bisphosphate by ATP, the first committing step of glycolysis. This chain is ATP-dependent 6-phosphofructokinase, found in Staphylococcus epidermidis (strain ATCC 35984 / DSM 28319 / BCRC 17069 / CCUG 31568 / BM 3577 / RP62A).